We begin with the raw amino-acid sequence, 104 residues long: Co-chaperonin GroES 2 (104 aa).

It belongs to the GroES chaperonin family. In terms of assembly, heptamer of 7 subunits arranged in a ring. Interacts with the chaperonin GroEL.

The protein localises to the cytoplasm. Functionally, together with the chaperonin GroEL, plays an essential role in assisting protein folding. The GroEL-GroES system forms a nano-cage that allows encapsulation of the non-native substrate proteins and provides a physical environment optimized to promote and accelerate protein folding. GroES binds to the apical surface of the GroEL ring, thereby capping the opening of the GroEL channel. The chain is Co-chaperonin GroES 2 from Bradyrhizobium diazoefficiens (strain JCM 10833 / BCRC 13528 / IAM 13628 / NBRC 14792 / USDA 110).